The primary structure comprises 225 residues: Ribonuclease 3 (225 aa).

Positions Ile7 to Glu129 constitute an RNase III domain. Glu42 contacts Mg(2+). The active site involves Asp46. Mg(2+) contacts are provided by Asp115 and Glu118. Glu118 is an active-site residue. In terms of domain architecture, DRBM spans Asp155 to Lys225.

The protein belongs to the ribonuclease III family. In terms of assembly, homodimer. Mg(2+) is required as a cofactor.

It localises to the cytoplasm. It catalyses the reaction Endonucleolytic cleavage to 5'-phosphomonoester.. In terms of biological role, digests double-stranded RNA. Involved in the processing of primary rRNA transcript to yield the immediate precursors to the large and small rRNAs (23S and 16S). Processes some mRNAs, and tRNAs when they are encoded in the rRNA operon. Processes pre-crRNA and tracrRNA of type II CRISPR loci if present in the organism. This Shewanella halifaxensis (strain HAW-EB4) protein is Ribonuclease 3.